We begin with the raw amino-acid sequence, 298 residues long: MAHACVSTSASSLRFTAGFVSASPNGSSFDSPKLSLPFEPLRSRKTNKLVSDRKNWKNSTPKAVYSGNLWTPEIPSPQGVWSIRDDLQVPSSPYFPAYAQGQGPPPMVQERFQSIISQLFQYRIIRCGGAVDDDMANIIVAQLLYLDAVDPTKDIVMYVNSPGGSVTAGMAIFDTMRHIRPDVSTVCVGLAASMGAFLLSAGTKGKRYSLPNSRIMIHQPLGGAQGGQTDIDIQANEMLHHKANLNGYLAYHTGQSLEKINQDTDRDFFMSAKEAKEYGLIDGVIMNPLKALQPLAAA.

Residues 1–100 constitute a chloroplast transit peptide; that stretch reads MAHACVSTSA…SSPYFPAYAQ (100 aa). Glycine 101 carries the N-acetylglycine modification. The Nucleophile role is filled by serine 193. Residue histidine 218 is part of the active site.

The protein belongs to the peptidase S14 family. Component of the chloroplastic Clp protease core complex which consist of at least 16 proteins: CLPP4 (3 copies), CLPP5 (3 copies), CLPR4 (2 copies), ClpP1 (1 copy), CLPP6 (1 copy), CLPR2 (1 copy), CLPT1 (1 copy), CLPT2 (1 copy) and 3 copies of CLPP3 and/or CLPR1 and/or CLPR3. The core complex is organized in two heptameric rings, one containing CLPP3,4,5,6 in a 1:2:3:1 ratio and the other CLPP1 and CLPR1,2,3,4 in a 3:1:1:1:1 ratio. Interacts with CHIP. Post-translationally, ubiquitinated in vitro by CHIP. In terms of tissue distribution, mostly expressed in leaves. Also detected in stems, and to a lower extent, in roots (at protein level).

Its subcellular location is the plastid. It localises to the chloroplast stroma. The enzyme catalyses Hydrolysis of proteins to small peptides in the presence of ATP and magnesium. alpha-casein is the usual test substrate. In the absence of ATP, only oligopeptides shorter than five residues are hydrolyzed (such as succinyl-Leu-Tyr-|-NHMec, and Leu-Tyr-Leu-|-Tyr-Trp, in which cleavage of the -Tyr-|-Leu- and -Tyr-|-Trp bonds also occurs).. Functionally, cleaves peptides in various proteins in a process that requires ATP hydrolysis. Has a chymotrypsin-like activity. Plays a major role in the degradation of misfolded proteins. This Arabidopsis thaliana (Mouse-ear cress) protein is ATP-dependent Clp protease proteolytic subunit 5, chloroplastic.